We begin with the raw amino-acid sequence, 435 residues long: Dual specificity protein kinase FUZ7 (435 aa).

Residues 1-61 form a disordered region; that stretch reads MLSSGAGSSI…TIGKSSAVTP (61 aa). The segment covering 46 to 59 has biased composition (polar residues); that stretch reads AASNASTIGKSSAV. The Protein kinase domain maps to 109–417; sequence LKTLSELGAG…PKDLTKHQYV (309 aa). Residues 115–123 and K138 contribute to the ATP site; that span reads LGAGNGGTV. The Proton acceptor role is filled by D231. Residues 307–359 are disordered; sequence NEEDDDSDADNNYTNEDLAGTLSPTKPAPMISLGQNEKQRRRKSKPAGVSLEG.

The protein belongs to the protein kinase superfamily. STE Ser/Thr protein kinase family. MAP kinase kinase subfamily.

The enzyme catalyses L-seryl-[protein] + ATP = O-phospho-L-seryl-[protein] + ADP + H(+). The catalysed reaction is L-threonyl-[protein] + ATP = O-phospho-L-threonyl-[protein] + ADP + H(+). It catalyses the reaction L-tyrosyl-[protein] + ATP = O-phospho-L-tyrosyl-[protein] + ADP + H(+). In terms of biological role, protein kinase that is necessary for a-locus-dependent processes, such as conjugation tube formation, filament formation, and maintenance of filamentous growth, and for a-locus-independent processes, such as tumor induction and teliospore germination. The protein is Dual specificity protein kinase FUZ7 (FUZ7) of Mycosarcoma maydis (Corn smut fungus).